The chain runs to 149 residues: UPF0178 protein Sama_3557 (149 aa).

This sequence belongs to the UPF0178 family.

This is UPF0178 protein Sama_3557 from Shewanella amazonensis (strain ATCC BAA-1098 / SB2B).